The primary structure comprises 361 residues: Peptide chain release factor 1 (361 aa).

The residue at position 235 (glutamine 235) is an N5-methylglutamine. The tract at residues 284–306 is disordered; it reads SQQATAEAMTRKLQVGSGDRSQR.

Belongs to the prokaryotic/mitochondrial release factor family. Methylated by PrmC. Methylation increases the termination efficiency of RF1.

It is found in the cytoplasm. Peptide chain release factor 1 directs the termination of translation in response to the peptide chain termination codons UAG and UAA. This chain is Peptide chain release factor 1, found in Xylella fastidiosa (strain 9a5c).